The sequence spans 388 residues: LL-diaminopimelate aminotransferase (388 aa).

2 residues coordinate substrate: Tyr16 and Gly41. Residues Tyr70, 104 to 105 (SK), Tyr129, Asn179, Tyr210, and 239 to 241 (SLS) each bind pyridoxal 5'-phosphate. Positions 105, 129, and 179 each coordinate substrate. Lys242 carries the N6-(pyridoxal phosphate)lysine modification. Arg250 is a pyridoxal 5'-phosphate binding site. Arg368 is a substrate binding site.

Belongs to the class-I pyridoxal-phosphate-dependent aminotransferase family. LL-diaminopimelate aminotransferase subfamily. Homodimer. Pyridoxal 5'-phosphate is required as a cofactor.

It catalyses the reaction (2S,6S)-2,6-diaminopimelate + 2-oxoglutarate = (S)-2,3,4,5-tetrahydrodipicolinate + L-glutamate + H2O + H(+). It participates in amino-acid biosynthesis; L-lysine biosynthesis via DAP pathway; LL-2,6-diaminopimelate from (S)-tetrahydrodipicolinate (aminotransferase route): step 1/1. Its function is as follows. Involved in the synthesis of meso-diaminopimelate (m-DAP or DL-DAP), required for both lysine and peptidoglycan biosynthesis. Catalyzes the direct conversion of tetrahydrodipicolinate to LL-diaminopimelate. This Nitratidesulfovibrio vulgaris (strain DP4) (Desulfovibrio vulgaris) protein is LL-diaminopimelate aminotransferase.